The primary structure comprises 510 residues: 2-isopropylmalate synthase (510 aa).

The 263-residue stretch at 5–267 (LVIFDTTLRD…DTRIDTTQIV (263 aa)) folds into the Pyruvate carboxyltransferase domain. Residues Asp-14, His-202, His-204, and Asn-238 each contribute to the Mn(2+) site. The segment at 392 to 510 (RLLSLVAHSE…SSLERTHPQV (119 aa)) is regulatory domain.

Belongs to the alpha-IPM synthase/homocitrate synthase family. LeuA type 1 subfamily. Homodimer. Requires Mn(2+) as cofactor.

The protein resides in the cytoplasm. The catalysed reaction is 3-methyl-2-oxobutanoate + acetyl-CoA + H2O = (2S)-2-isopropylmalate + CoA + H(+). Its pathway is amino-acid biosynthesis; L-leucine biosynthesis; L-leucine from 3-methyl-2-oxobutanoate: step 1/4. Functionally, catalyzes the condensation of the acetyl group of acetyl-CoA with 3-methyl-2-oxobutanoate (2-ketoisovalerate) to form 3-carboxy-3-hydroxy-4-methylpentanoate (2-isopropylmalate). The chain is 2-isopropylmalate synthase from Nitrosomonas eutropha (strain DSM 101675 / C91 / Nm57).